We begin with the raw amino-acid sequence, 229 residues long: MANWTQLGLQDASSPLMEELIYFHDYTLIILTLITILVFYGLASLIVSSNTNRFFLEGQSLETIWTVIPAVILIFIALPSLQLLYLIDEVNNPFLTIKAIGHQWYWSYEYADYRDLEFDSYMIPTNDLTLGNPRLLEVDNRLTLPSQTPIRVLVTSSDVLHSWTVPSLGIKMDAVPGRLNQVNFFISRCGLFYGQCSEICGANHSFMPIVIESVNFSSFENWVSNFLNE.

The Mitochondrial intermembrane segment spans residues 1–26 (MANWTQLGLQDASSPLMEELIYFHDY). A helical transmembrane segment spans residues 27–48 (TLIILTLITILVFYGLASLIVS). The Mitochondrial matrix portion of the chain corresponds to 49 to 62 (SNTNRFFLEGQSLE). The chain crosses the membrane as a helical span at residues 63–82 (TIWTVIPAVILIFIALPSLQ). Topologically, residues 83–229 (LLYLIDEVNN…ENWVSNFLNE (147 aa)) are mitochondrial intermembrane. Residues His161, Cys196, Glu198, Cys200, His204, and Met207 each contribute to the Cu cation site. Glu198 serves as a coordination point for Mg(2+).

The protein belongs to the cytochrome c oxidase subunit 2 family. Component of the cytochrome c oxidase (complex IV, CIV), a multisubunit enzyme composed of a catalytic core of 3 subunits and several supernumerary subunits. The complex exists as a monomer or a dimer and forms supercomplexes (SCs) in the inner mitochondrial membrane with ubiquinol-cytochrome c oxidoreductase (cytochrome b-c1 complex, complex III, CIII). The cofactor is Cu cation.

Its subcellular location is the mitochondrion inner membrane. The catalysed reaction is 4 Fe(II)-[cytochrome c] + O2 + 8 H(+)(in) = 4 Fe(III)-[cytochrome c] + 2 H2O + 4 H(+)(out). Component of the cytochrome c oxidase, the last enzyme in the mitochondrial electron transport chain which drives oxidative phosphorylation. The respiratory chain contains 3 multisubunit complexes succinate dehydrogenase (complex II, CII), ubiquinol-cytochrome c oxidoreductase (cytochrome b-c1 complex, complex III, CIII) and cytochrome c oxidase (complex IV, CIV), that cooperate to transfer electrons derived from NADH and succinate to molecular oxygen, creating an electrochemical gradient over the inner membrane that drives transmembrane transport and the ATP synthase. Cytochrome c oxidase is the component of the respiratory chain that catalyzes the reduction of oxygen to water. Electrons originating from reduced cytochrome c in the intermembrane space (IMS) are transferred via the dinuclear copper A center (CU(A)) of subunit 2 and heme A of subunit 1 to the active site in subunit 1, a binuclear center (BNC) formed by heme A3 and copper B (CU(B)). The BNC reduces molecular oxygen to 2 water molecules using 4 electrons from cytochrome c in the IMS and 4 protons from the mitochondrial matrix. This Pisaster ochraceus (Ochre sea star) protein is Cytochrome c oxidase subunit 2 (COII).